The chain runs to 304 residues: Cell surface-binding protein OPG105 (304 aa).

It belongs to the alpha-carbonic anhydrase family. As to quaternary structure, homodimer; disulfide-linked. In terms of processing, apparently non-glycosylated.

Its subcellular location is the virion membrane. Its function is as follows. Binds to chondroitin sulfate on the cell surface to provide virion attachment to target cell. The sequence is that of Cell surface-binding protein OPG105 (OPG105) from Monkeypox virus.